A 377-amino-acid chain; its full sequence is Phosphatidylserine decarboxylase proenzyme, mitochondrial (377 aa).

Residues methionine 1–leucine 34 constitute a mitochondrion transit peptide. Residues threonine 35–lysine 61 lie on the Mitochondrial matrix side of the membrane. Residues tryptophan 62–phenylalanine 80 traverse the membrane as a helical segment. Residues threonine 81–valine 377 lie on the Mitochondrial intermembrane side of the membrane. Catalysis depends on charge relay system; for autoendoproteolytic cleavage activity residues aspartate 181, histidine 238, and serine 344. Serine 344 serves as the catalytic Schiff-base intermediate with substrate; via pyruvic acid; for decarboxylase activity. Serine 344 carries the pyruvic acid (Ser); by autocatalysis modification.

Belongs to the phosphatidylserine decarboxylase family. PSD-B subfamily. Eukaryotic type I sub-subfamily. In terms of assembly, heterodimer of a large membrane-associated beta subunit and a small pyruvoyl-containing alpha subunit. Pyruvate is required as a cofactor. Post-translationally, is synthesized initially as an inactive proenzyme. Formation of the active enzyme involves a self-maturation process in which the active site pyruvoyl group is generated from an internal serine residue via an autocatalytic post-translational modification. Two non-identical subunits are generated from the proenzyme in this reaction, and the pyruvate is formed at the N-terminus of the alpha chain, which is derived from the carboxyl end of the proenzyme. The autoendoproteolytic cleavage occurs by a canonical serine protease mechanism, in which the side chain hydroxyl group of the serine supplies its oxygen atom to form the C-terminus of the beta chain, while the remainder of the serine residue undergoes an oxidative deamination to produce ammonia and the pyruvoyl prosthetic group on the alpha chain. During this reaction, the Ser that is part of the protease active site of the proenzyme becomes the pyruvoyl prosthetic group, which constitutes an essential element of the active site of the mature decarboxylase.

The protein resides in the mitochondrion inner membrane. The catalysed reaction is a 1,2-diacyl-sn-glycero-3-phospho-L-serine + H(+) = a 1,2-diacyl-sn-glycero-3-phosphoethanolamine + CO2. The protein operates within phospholipid metabolism; phosphatidylethanolamine biosynthesis; phosphatidylethanolamine from CDP-diacylglycerol: step 2/2. Catalyzes the formation of phosphatidylethanolamine (PtdEtn) from phosphatidylserine (PtdSer). Plays a central role in phospholipid metabolism and in the interorganelle trafficking of phosphatidylserine. The polypeptide is Phosphatidylserine decarboxylase proenzyme, mitochondrial (Caenorhabditis elegans).